The chain runs to 743 residues: Inhibitor of nuclear factor kappa-B kinase subunit alpha (743 aa).

A Protein kinase domain is found at 15-300; sequence WDMKDRLGTG…IDCGRPRCFM (286 aa). Residues 21–29 and lysine 44 contribute to the ATP site; that span reads LGTGGFGNV. Aspartate 144 serves as the catalytic Proton acceptor. The tract at residues 453–474 is leucine-zipper; that stretch reads LLRFNTNLTKMKNTMVSASQQL. Positions 736–741 are NEMO-binding; it reads MDFSWL.

The protein belongs to the protein kinase superfamily. Ser/Thr protein kinase family. I-kappa-B kinase subfamily.

Its subcellular location is the cytoplasm. The protein resides in the nucleus. It catalyses the reaction L-seryl-[I-kappa-B protein] + ATP = O-phospho-L-seryl-[I-kappa-B protein] + ADP + H(+). Activated when phosphorylated and inactivated when dephosphorylated. Its function is as follows. Phosphorylates inhibitors of NF-kappa-B thus leading to the dissociation of the inhibitor/NF-kappa-B complex and ultimately the degradation of the inhibitor. Phosphorylates 'Ser-10' of histone H3 at NF-kappa-B-regulated promoters during inflammatory responses triggered by cytokines. This chain is Inhibitor of nuclear factor kappa-B kinase subunit alpha (chuk), found in Xenopus laevis (African clawed frog).